The sequence spans 1059 residues: Disks large-associated protein 2 (1059 aa).

Disordered regions lie at residues 31 to 54 and 245 to 311; these read GEPE…PAEE and KSHS…SDST. Positions 245 to 261 are enriched in polar residues; that stretch reads KSHSLEGSSKSNINGTK. Residues 262 to 271 are compositionally biased toward basic and acidic residues; that stretch reads SDSRVDDHHQ. Over residues 272–285 the composition is skewed to basic residues; sequence SHLSKHSKRSKSKE. S302, S308, S390, and S456 each carry phosphoserine. Residues 613 to 669 are disordered; the sequence is YKKTPPPVPPRTTSKPLISVTAQSSTESTQDAYQDSRAQRMSPWPQDSRGGLYNSMD. Positions 632-645 are enriched in polar residues; that stretch reads VTAQSSTESTQDAY. S667, S670, S673, and S720 each carry phosphoserine. Residues 723–756 form a disordered region; sequence VQDSEFPDHQPYPRSDVETATDSDTESRGLREYH. Residue T743 is modified to Phosphothreonine. A Phosphoserine modification is found at S745. The span at 747–756 shows a compositional bias: basic and acidic residues; that stretch reads TESRGLREYH. Phosphoserine is present on residues S776, S811, S983, and S1012. The segment at 985 to 1025 is disordered; it reads ERKEERKIPPPIPKKPPKGKFPITREKSLDLPDRQRQEARR. Positions 1007 to 1025 are enriched in basic and acidic residues; sequence ITREKSLDLPDRQRQEARR.

It belongs to the SAPAP family. As to quaternary structure, interacts with DLG4/PSD-95. In terms of tissue distribution, expressed in various brain areas.

It localises to the cell membrane. The protein localises to the postsynaptic density. It is found in the synapse. Functionally, may play a role in the molecular organization of synapses and neuronal cell signaling. Could be an adapter protein linking ion channel to the subsynaptic cytoskeleton. May induce enrichment of PSD-95/SAP90 at the plasma membrane. This is Disks large-associated protein 2 from Mus musculus (Mouse).